A 285-amino-acid polypeptide reads, in one-letter code: Ribose-phosphate pyrophosphokinase (285 aa).

ATP is bound by residues 34 to 36 (DGE) and 91 to 92 (RQ). The Mg(2+) site is built by histidine 124 and aspartate 162. Lysine 185 is a catalytic residue. D-ribose 5-phosphate contacts are provided by residues arginine 187, aspartate 211, and 215–219 (STGGT).

The protein belongs to the ribose-phosphate pyrophosphokinase family. Class III (archaeal) subfamily. Mg(2+) serves as cofactor.

It localises to the cytoplasm. The enzyme catalyses D-ribose 5-phosphate + ATP = 5-phospho-alpha-D-ribose 1-diphosphate + AMP + H(+). It participates in metabolic intermediate biosynthesis; 5-phospho-alpha-D-ribose 1-diphosphate biosynthesis; 5-phospho-alpha-D-ribose 1-diphosphate from D-ribose 5-phosphate (route I): step 1/1. In terms of biological role, involved in the biosynthesis of the central metabolite phospho-alpha-D-ribosyl-1-pyrophosphate (PRPP) via the transfer of pyrophosphoryl group from ATP to 1-hydroxyl of ribose-5-phosphate (Rib-5-P). This Pyrococcus abyssi (strain GE5 / Orsay) protein is Ribose-phosphate pyrophosphokinase.